A 309-amino-acid polypeptide reads, in one-letter code: ESX-3 secretion system protein EccE3 (309 aa).

2 helical membrane-spanning segments follow: residues 5-25 (IALA…QTTT) and 29-49 (VLGV…GMFL).

This sequence belongs to the EccE family. As to quaternary structure, part of the ESX-3 / type VII secretion system (T7SS), which is composed of cytosolic and membrane components. The ESX-3 membrane complex is composed of EccB3, EccC3, EccD3 and EccE3.

The protein localises to the cell inner membrane. Its function is as follows. Part of the ESX-3 specialized secretion system, which is required for siderophore-mediated iron acquisition and for the secretion of EsxH and EsxG. This Mycolicibacterium smegmatis (strain ATCC 700084 / mc(2)155) (Mycobacterium smegmatis) protein is ESX-3 secretion system protein EccE3.